The following is a 256-amino-acid chain: Imidazole glycerol phosphate synthase subunit HisF (256 aa).

Active-site residues include aspartate 12 and aspartate 131.

This sequence belongs to the HisA/HisF family. In terms of assembly, heterodimer of HisH and HisF.

The protein localises to the cytoplasm. It carries out the reaction 5-[(5-phospho-1-deoxy-D-ribulos-1-ylimino)methylamino]-1-(5-phospho-beta-D-ribosyl)imidazole-4-carboxamide + L-glutamine = D-erythro-1-(imidazol-4-yl)glycerol 3-phosphate + 5-amino-1-(5-phospho-beta-D-ribosyl)imidazole-4-carboxamide + L-glutamate + H(+). Its pathway is amino-acid biosynthesis; L-histidine biosynthesis; L-histidine from 5-phospho-alpha-D-ribose 1-diphosphate: step 5/9. In terms of biological role, IGPS catalyzes the conversion of PRFAR and glutamine to IGP, AICAR and glutamate. The HisF subunit catalyzes the cyclization activity that produces IGP and AICAR from PRFAR using the ammonia provided by the HisH subunit. In Thermobifida fusca (strain YX), this protein is Imidazole glycerol phosphate synthase subunit HisF.